Here is a 280-residue protein sequence, read N- to C-terminus: Phosphatidylglycerol--prolipoprotein diacylglyceryl transferase (280 aa).

4 helical membrane-spanning segments follow: residues 26–46 (LAIH…WFYA), 71–91 (FILW…ILFY), 106–126 (IWNG…AMIL), and 132–152 (GIPV…GLLF). Arg154 contributes to the a 1,2-diacyl-sn-glycero-3-phospho-(1'-sn-glycerol) binding site. Transmembrane regions (helical) follow at residues 193–213 (GLEG…FKAL), 217–237 (GTVT…VEFF), and 251–271 (WLTM…WAVL).

This sequence belongs to the Lgt family.

The protein localises to the cell inner membrane. It carries out the reaction L-cysteinyl-[prolipoprotein] + a 1,2-diacyl-sn-glycero-3-phospho-(1'-sn-glycerol) = an S-1,2-diacyl-sn-glyceryl-L-cysteinyl-[prolipoprotein] + sn-glycerol 1-phosphate + H(+). It functions in the pathway protein modification; lipoprotein biosynthesis (diacylglyceryl transfer). Catalyzes the transfer of the diacylglyceryl group from phosphatidylglycerol to the sulfhydryl group of the N-terminal cysteine of a prolipoprotein, the first step in the formation of mature lipoproteins. This is Phosphatidylglycerol--prolipoprotein diacylglyceryl transferase from Agrobacterium fabrum (strain C58 / ATCC 33970) (Agrobacterium tumefaciens (strain C58)).